The sequence spans 385 residues: Succinate--CoA ligase [ADP-forming] subunit beta (385 aa).

The 235-residue stretch at 9 to 243 (KEILSAYGIP…YSQLDTLEIN (235 aa)) folds into the ATP-grasp domain. Residues Lys-45, 52 to 54 (GRG), Glu-98, Val-101, and Glu-106 contribute to the ATP site. Mg(2+)-binding residues include Asn-198 and Asp-212. Residues Asn-263 and 320-322 (GIM) each bind substrate.

This sequence belongs to the succinate/malate CoA ligase beta subunit family. In terms of assembly, heterotetramer of two alpha and two beta subunits. Mg(2+) is required as a cofactor.

The catalysed reaction is succinate + ATP + CoA = succinyl-CoA + ADP + phosphate. The enzyme catalyses GTP + succinate + CoA = succinyl-CoA + GDP + phosphate. It functions in the pathway carbohydrate metabolism; tricarboxylic acid cycle; succinate from succinyl-CoA (ligase route): step 1/1. Succinyl-CoA synthetase functions in the citric acid cycle (TCA), coupling the hydrolysis of succinyl-CoA to the synthesis of either ATP or GTP and thus represents the only step of substrate-level phosphorylation in the TCA. The beta subunit provides nucleotide specificity of the enzyme and binds the substrate succinate, while the binding sites for coenzyme A and phosphate are found in the alpha subunit. The protein is Succinate--CoA ligase [ADP-forming] subunit beta of Geobacter sulfurreducens (strain ATCC 51573 / DSM 12127 / PCA).